The chain runs to 269 residues: Troponin T, fast skeletal muscle (269 aa).

Acidic residues predominate over residues 1 to 23; sequence MSDEEVEQVEEQYEEEEEAQEEA. The tract at residues 1–72 is disordered; that stretch reads MSDEEVEQVE…EKVDFDDIQK (72 aa). Ser2 bears the N-acetylserine mark. The residue at position 2 (Ser2) is a Phosphoserine. Residues 24-34 show a composition bias toward basic and acidic residues; that stretch reads AEVHEEVHEPE. Acidic residues predominate over residues 35–47; that stretch reads EVQEDTAEEDAEE. Over residues 60–72 the composition is skewed to basic and acidic residues; sequence PEGEKVDFDDIQK. Position 88 is a phosphoserine (Ser88). The segment covering 111–153 has biased composition (basic and acidic residues); that stretch reads RAERAEQQRIRAEKERERQNRLAEEKARREEEDAKRRAEDDLK. Residues 111-158 are disordered; that stretch reads RAERAEQQRIRAEKERERQNRLAEEKARREEEDAKRRAEDDLKKKKAL. Ser159, Ser166, and Ser167 each carry phosphoserine. The disordered stretch occupies residues 245–269; it reads RIDQAQKHSKKAGTPAKGKVGGRWK.

The protein belongs to the troponin T family. In terms of tissue distribution, in fetal and adult fast skeletal muscles, with a higher level expression in fetal than in adult muscle.

Its function is as follows. Troponin T is the tropomyosin-binding subunit of troponin, the thin filament regulatory complex which confers calcium-sensitivity to striated muscle actomyosin ATPase activity. The polypeptide is Troponin T, fast skeletal muscle (TNNT3) (Homo sapiens (Human)).